The chain runs to 240 residues: UDP-2,3-diacylglucosamine hydrolase (240 aa).

Asp8, His10, Asp41, Asn79, and His114 together coordinate Mn(2+). 79-80 (NR) is a substrate binding site. 5 residues coordinate substrate: Asp122, Ser160, Asn164, Lys167, and His195. Mn(2+)-binding residues include His195 and His197.

The protein belongs to the LpxH family. The cofactor is Mn(2+).

It localises to the cell inner membrane. It catalyses the reaction UDP-2-N,3-O-bis[(3R)-3-hydroxytetradecanoyl]-alpha-D-glucosamine + H2O = 2-N,3-O-bis[(3R)-3-hydroxytetradecanoyl]-alpha-D-glucosaminyl 1-phosphate + UMP + 2 H(+). Its pathway is glycolipid biosynthesis; lipid IV(A) biosynthesis; lipid IV(A) from (3R)-3-hydroxytetradecanoyl-[acyl-carrier-protein] and UDP-N-acetyl-alpha-D-glucosamine: step 4/6. Its function is as follows. Hydrolyzes the pyrophosphate bond of UDP-2,3-diacylglucosamine to yield 2,3-diacylglucosamine 1-phosphate (lipid X) and UMP by catalyzing the attack of water at the alpha-P atom. Involved in the biosynthesis of lipid A, a phosphorylated glycolipid that anchors the lipopolysaccharide to the outer membrane of the cell. This chain is UDP-2,3-diacylglucosamine hydrolase, found in Proteus mirabilis (strain HI4320).